Here is a 377-residue protein sequence, read N- to C-terminus: Nitric oxide reductase FlRd-NAD(+) reductase (377 aa).

The protein belongs to the FAD-dependent oxidoreductase family. FAD is required as a cofactor.

It localises to the cytoplasm. The enzyme catalyses 2 reduced [nitric oxide reductase rubredoxin domain] + NAD(+) + H(+) = 2 oxidized [nitric oxide reductase rubredoxin domain] + NADH. The protein operates within nitrogen metabolism; nitric oxide reduction. In terms of biological role, one of at least two accessory proteins for anaerobic nitric oxide (NO) reductase. Reduces the rubredoxin moiety of NO reductase. This chain is Nitric oxide reductase FlRd-NAD(+) reductase, found in Escherichia coli (strain 55989 / EAEC).